The primary structure comprises 298 residues: Tyrosine recombinase XerC (298 aa).

The Core-binding (CB) domain maps to 2–88 (TDLHTDVERY…ALRSFFDWLV (87 aa)). A Tyr recombinase domain is found at 109–288 (HLPKNIDVDD…DFQHLASVYD (180 aa)). Residues Arg148, Lys172, His240, Arg243, and His266 contribute to the active site. The active-site O-(3'-phospho-DNA)-tyrosine intermediate is the Tyr275.

The protein belongs to the 'phage' integrase family. XerC subfamily. As to quaternary structure, forms a cyclic heterotetrameric complex composed of two molecules of XerC and two molecules of XerD, in which XerC interacts with XerD via its C-terminal region, XerD interacts with XerC via its C-terminal region and so on.

Its subcellular location is the cytoplasm. With respect to regulation, ftsK may regulate the catalytic switch between XerC and XerD in the heterotetrameric complex during the two steps of the recombination process. Its function is as follows. Site-specific tyrosine recombinase, which acts by catalyzing the cutting and rejoining of the recombining DNA molecules. Binds cooperatively to specific DNA consensus sequences that are separated from XerD binding sites by a short central region, forming the heterotetrameric XerC-XerD complex that recombines DNA substrates. The complex is essential to convert dimers of the bacterial chromosome into monomers to permit their segregation at cell division. It also contributes to the segregational stability of plasmids. In the complex XerC specifically exchanges the top DNA strands. The sequence is that of Tyrosine recombinase XerC from Escherichia coli O127:H6 (strain E2348/69 / EPEC).